A 349-amino-acid chain; its full sequence is Prostaglandin reductase 1 (349 aa).

Residue Thr18 is modified to Phosphothreonine. Position 20 is a phosphoserine (Ser20). NADP(+) is bound by residues 152-155 (GAVG), Lys178, Tyr193, Asn217, 239-245 (CGAISMY), 270-272 (FIF), and Asn321. Lys178 carries the post-translational modification N6-(2-hydroxyisobutyryl)lysine; alternate. An N6-acetyllysine; alternate modification is found at Lys178.

This sequence belongs to the NADP-dependent oxidoreductase L4BD family. In terms of assembly, monomer or homodimer.

It localises to the cytoplasm. The catalysed reaction is 13,14-dihydro-15-oxo-prostaglandin E1 + NADP(+) = 15-oxoprostaglandin E1 + NADPH + H(+). It catalyses the reaction 13,14-dihydro-15-oxo-prostaglandin E2 + NADP(+) = 15-oxoprostaglandin E2 + NADPH + H(+). It carries out the reaction 13,14-dihydro-15-oxo-prostaglandin F1alpha + NADP(+) = 15-oxoprostaglandin F1alpha + NADPH + H(+). The enzyme catalyses 13,14-dihydro-15-oxo-PGF2alpha + NADP(+) = 15-oxoprostaglandin F2alpha + NADPH + H(+). The catalysed reaction is leukotriene B4 + NADP(+) = 12-oxo-leukotriene B4 + NADPH + H(+). It catalyses the reaction 20-hydroxy-leukotriene B4 + NADP(+) = 12-oxo-20-hydroxy-leukotriene B4 + NADPH + H(+). It carries out the reaction 6-trans-leukotriene B4 + NADP(+) = 12-oxo-(5S)-hydroxy-(6E,8E,10E,14Z)-eicosatetraenoate + NADPH + H(+). The enzyme catalyses (5S,12S)-dihydroxy-(6E,10E,12E,14Z)-eicosatetraenoate + NADP(+) = 12-oxo-(5S)-hydroxy-(6E,8E,10E,14Z)-eicosatetraenoate + NADPH + H(+). The catalysed reaction is an n-alkanal + NADP(+) = an alk-2-enal + NADPH + H(+). It catalyses the reaction hexanal + NADP(+) = (E)-hex-2-enal + NADPH + H(+). It carries out the reaction octanal + NADP(+) = (2E)-octenal + NADPH + H(+). The enzyme catalyses decanal + NADP(+) = (2E)-decenal + NADPH + H(+). The catalysed reaction is dodecanal + NADP(+) = (2E)-dodecenal + NADPH + H(+). It catalyses the reaction 4-hydroxynonanal + NADP(+) = (E)-4-hydroxynon-2-enal + NADPH + H(+). It carries out the reaction pentan-2-one + NADP(+) = (E)-pent-3-en-2-one + NADPH + H(+). The enzyme catalyses nonan-2-one + NADP(+) = (3E)-nonen-2-one + NADPH + H(+). Functionally, NAD(P)H-dependent oxidoreductase involved in metabolic inactivation of pro- and anti-inflammatory eicosanoids: prostaglandins (PG), leukotrienes (LT) and lipoxins (LX). Catalyzes with high efficiency the reduction of the 13,14 double bond of 15-oxoPGs, including 15-oxo-PGE1, 15-oxo-PGE2, 15-oxo-PGF1-alpha and 15-oxo-PGF2-alpha. Catalyzes with lower efficiency the oxidation of the hydroxyl group at C12 of LTB4 and its derivatives, converting them into biologically less active 12-oxo-LTB4 metabolites. Reduces 15-oxo-LXA4 to 13,14 dihydro-15-oxo-LXA4, enhancing neutrophil recruitment at the inflammatory site. Plays a role in metabolic detoxification of alkenals and ketones. Reduces alpha,beta-unsaturated alkenals and ketones, particularly those with medium-chain length, showing highest affinity toward (2E)-decenal and (3E)-3-nonen-2-one. May inactivate 4-hydroxy-2-nonenal, a cytotoxic lipid constituent of oxidized low-density lipoprotein particles. The protein is Prostaglandin reductase 1 (PTGR1) of Oryctolagus cuniculus (Rabbit).